Reading from the N-terminus, the 70-residue chain is U-scoloptoxin(20)-Sm1a (70 aa).

The signal sequence occupies residues 1 to 24; that stretch reads MKKRSQVFCIFIAMVLLILPLSMS.

Belongs to the scoloptoxin-20 family. Contains 3 disulfide bonds. Expressed by the venom gland.

It is found in the secreted. The polypeptide is U-scoloptoxin(20)-Sm1a (Scolopendra morsitans (Tanzanian blue ringleg centipede)).